Reading from the N-terminus, the 476-residue chain is Glutamyl-tRNA(Gln) amidotransferase subunit A (476 aa).

Active-site charge relay system residues include K69 and S144. S168 serves as the catalytic Acyl-ester intermediate.

Belongs to the amidase family. GatA subfamily. In terms of assembly, heterotrimer of A, B and C subunits.

The enzyme catalyses L-glutamyl-tRNA(Gln) + L-glutamine + ATP + H2O = L-glutaminyl-tRNA(Gln) + L-glutamate + ADP + phosphate + H(+). Allows the formation of correctly charged Gln-tRNA(Gln) through the transamidation of misacylated Glu-tRNA(Gln) in organisms which lack glutaminyl-tRNA synthetase. The reaction takes place in the presence of glutamine and ATP through an activated gamma-phospho-Glu-tRNA(Gln). In Sulfolobus acidocaldarius (strain ATCC 33909 / DSM 639 / JCM 8929 / NBRC 15157 / NCIMB 11770), this protein is Glutamyl-tRNA(Gln) amidotransferase subunit A.